A 320-amino-acid polypeptide reads, in one-letter code: ATP phosphoribosyltransferase (320 aa).

Belongs to the ATP phosphoribosyltransferase family. Long subfamily. Mg(2+) serves as cofactor.

The protein resides in the cytoplasm. The enzyme catalyses 1-(5-phospho-beta-D-ribosyl)-ATP + diphosphate = 5-phospho-alpha-D-ribose 1-diphosphate + ATP. It functions in the pathway amino-acid biosynthesis; L-histidine biosynthesis; L-histidine from 5-phospho-alpha-D-ribose 1-diphosphate: step 1/9. Its activity is regulated as follows. Feedback inhibited by histidine. Functionally, catalyzes the condensation of ATP and 5-phosphoribose 1-diphosphate to form N'-(5'-phosphoribosyl)-ATP (PR-ATP). Has a crucial role in the pathway because the rate of histidine biosynthesis seems to be controlled primarily by regulation of HisG enzymatic activity. The sequence is that of ATP phosphoribosyltransferase (hisG) from Caulobacter vibrioides (strain ATCC 19089 / CIP 103742 / CB 15) (Caulobacter crescentus).